A 209-amino-acid polypeptide reads, in one-letter code: Uracil phosphoribosyltransferase (209 aa).

5-phospho-alpha-D-ribose 1-diphosphate is bound by residues Arg-79, Arg-104, and 131–139; that span reads DPMLATGNS. Uracil-binding positions include Ile-194 and 199–201; that span reads GDA. Asp-200 lines the 5-phospho-alpha-D-ribose 1-diphosphate pocket.

This sequence belongs to the UPRTase family. Requires Mg(2+) as cofactor.

It carries out the reaction UMP + diphosphate = 5-phospho-alpha-D-ribose 1-diphosphate + uracil. Its pathway is pyrimidine metabolism; UMP biosynthesis via salvage pathway; UMP from uracil: step 1/1. With respect to regulation, allosterically activated by GTP. Its function is as follows. Catalyzes the conversion of uracil and 5-phospho-alpha-D-ribose 1-diphosphate (PRPP) to UMP and diphosphate. This is Uracil phosphoribosyltransferase from Polaromonas naphthalenivorans (strain CJ2).